The sequence spans 368 residues: MSREIRSLESIISDARENTHEKMLIRKQRDMTTDIAPERDLQGRFCSLRRIGEGTYGVVFKAIHVRDNVKCALKMIRTDRDEEGIPSTCLREISCIKDLQHDNIVTLFDIIYANSKLYMVFEFIDRDLKNLLEMLEPTNSVLPPNYVKSFMWQLLSALSYCHLRRIVHRDLKPQNILVSDSGVIKIADFGLARNFSFPSRNYTHEVVTLWYRPPEILLGSQRYSTSLDMWSLGCIFSEIASNKPLFPGECEISQLFKIFEIVGTPNIKSWPGVDSFPHYKAVFPQWPVNLKKLEETSCLTGNGLDVLREILRYPPERRLTAKGALSHRYFLQNGFTQNRPSVTDLMKDIRAQNRTPPLLNNHQEKSIF.

Positions 45–330 constitute a Protein kinase domain; the sequence is FCSLRRIGEG…AKGALSHRYF (286 aa). Residues 51 to 59 and Lys74 each bind ATP; that span reads IGEGTYGVV. Asp170 (proton acceptor) is an active-site residue. Mg(2+)-binding residues include Asn175 and Asp188.

This sequence belongs to the protein kinase superfamily. CMGC Ser/Thr protein kinase family. CDC2/CDKX subfamily. In terms of assembly, interacts with cye-1; the interaction likely regulates cdk-2 activity and is probably required for gld-1 phosphorylation. It depends on Mg(2+) as a cofactor.

The catalysed reaction is L-seryl-[protein] + ATP = O-phospho-L-seryl-[protein] + ADP + H(+). The enzyme catalyses L-threonyl-[protein] + ATP = O-phospho-L-threonyl-[protein] + ADP + H(+). In terms of biological role, serine/threonine-protein kinase which, in association with cye-1, regulates proliferation, quiescent state and cell fate during the development of several cell lineages. In the embryo, initiates the establishment of cell polarity through the recruitment of the centrosomal proteins spd-2 and spd-5 during prophase. Phosphorylation and inhibition of the translational repressor gld-1 by the cdk-2/cye-1 complex regulates the pool of germline stem cells and the size of the mitotic zone in the gonads by preventing entry into meiosis. The chain is Cyclin-dependent kinase 2 from Caenorhabditis elegans.